We begin with the raw amino-acid sequence, 1219 residues long: Protein jagged-1 (1219 aa).

The signal sequence occupies residues Met-1 to Gly-33. Residues Gln-34 to Asp-1067 lie on the Extracellular side of the membrane. Asn-143 is a glycosylation site (N-linked (GlcNAc...) asparagine). The region spanning Val-185–Cys-229 is the DSL domain. Disulfide bonds link Cys-187–Cys-196 and Cys-200–Cys-212. Residues Phe-199–Phe-207 form an important for interaction with NOTCH1 region. Residue Asn-217 is glycosylated (N-linked (GlcNAc...) asparagine). Intrachain disulfides connect Cys-220/Cys-229, Cys-234/Cys-245, Cys-238/Cys-251, Cys-253/Cys-262, Cys-265/Cys-276, Cys-271/Cys-282, Cys-284/Cys-293, Cys-300/Cys-312, Cys-306/Cys-322, Cys-324/Cys-333, Cys-340/Cys-351, Cys-345/Cys-360, Cys-362/Cys-371, Cys-378/Cys-389, Cys-383/Cys-398, Cys-400/Cys-409, Cys-416/Cys-427, Cys-421/Cys-436, Cys-438/Cys-447, Cys-454/Cys-464, Cys-458/Cys-473, Cys-475/Cys-484, Cys-491/Cys-502, Cys-496/Cys-511, Cys-513/Cys-522, Cys-529/Cys-540, Cys-534/Cys-549, Cys-551/Cys-560, Cys-578/Cys-605, Cys-599/Cys-615, Cys-617/Cys-626, Cys-633/Cys-644, Cys-638/Cys-653, Cys-655/Cys-664, Cys-671/Cys-682, Cys-676/Cys-691, Cys-693/Cys-702, Cys-709/Cys-720, Cys-714/Cys-729, and Cys-731/Cys-740. Residues Asn-230–Asp-263 form the EGF-like 1 domain. Residues Lys-264 to Asp-294 form the EGF-like 2; atypical domain. 2 consecutive EGF-like domains span residues Asp-296–Glu-334 and Ala-336–Ser-372. In terms of domain architecture, EGF-like 5; calcium-binding spans Asn-374 to Gln-410. An N-linked (GlcNAc...) asparagine glycan is attached at Asn-382. Residues Asp-412–Asp-448 form the EGF-like 6; calcium-binding domain. In terms of domain architecture, EGF-like 7; calcium-binding spans Asn-450–Glu-485. Residues Asp-487–Gln-523 form the EGF-like 8; calcium-binding domain. EGF-like domains lie at Asp-525–Ser-561 and Asp-586–His-627. Asn-559 carries N-linked (GlcNAc...) asparagine glycosylation. The EGF-like 11; calcium-binding domain occupies Asn-629 to Glu-665. The EGF-like 12; calcium-binding domain maps to Asn-667–His-703. EGF-like domains are found at residues Arg-705–Asn-741 and Arg-744–Thr-780. Asn-745 carries an N-linked (GlcNAc...) asparagine glycan. 11 disulfides stabilise this stretch: Cys-748–Cys-759, Cys-753–Cys-768, Cys-770–Cys-779, Cys-786–Cys-797, Cys-791–Cys-806, Cys-808–Cys-817, Cys-824–Cys-835, Cys-829–Cys-844, Cys-846–Cys-855, Cys-925–Cys-936, and Cys-948–Cys-958. An EGF-like 15; calcium-binding domain is found at Asn-782–Arg-818. Residues Asn-820 to His-856 enclose the EGF-like 16; calcium-binding domain. 4 N-linked (GlcNAc...) asparagine glycosylation sites follow: Asn-960, Asn-991, Asn-1045, and Asn-1064. Residues Phe-1068 to Val-1093 traverse the membrane as a helical segment. The Cytoplasmic portion of the chain corresponds to Arg-1094–Val-1219. A disordered region spans residues Arg-1182 to Val-1219. Over residues Arg-1189–Lys-1200 the composition is skewed to polar residues.

Interacts with NOTCH1. Interacts with NOTCH2 and NOTCH3. Widely expressed in a variety of tissues.

The protein localises to the membrane. The protein resides in the cell membrane. Ligand for multiple Notch receptors and involved in the mediation of Notch signaling. May be involved in cell-fate decisions during hematopoiesis. Enhances fibroblast growth factor-induced angiogenesis (in vitro). Seems to be involved in early and late stages of mammalian cardiovascular development. Inhibits myoblast differentiation. May regulate fibroblast growth factor-induced angiogenesis. In Rattus norvegicus (Rat), this protein is Protein jagged-1 (Jag1).